The primary structure comprises 106 residues: Pyrimidine/purine nucleoside phosphorylase (106 aa).

Belongs to the nucleoside phosphorylase PpnP family.

The catalysed reaction is a purine D-ribonucleoside + phosphate = a purine nucleobase + alpha-D-ribose 1-phosphate. The enzyme catalyses adenosine + phosphate = alpha-D-ribose 1-phosphate + adenine. It catalyses the reaction cytidine + phosphate = cytosine + alpha-D-ribose 1-phosphate. It carries out the reaction guanosine + phosphate = alpha-D-ribose 1-phosphate + guanine. The catalysed reaction is inosine + phosphate = alpha-D-ribose 1-phosphate + hypoxanthine. The enzyme catalyses thymidine + phosphate = 2-deoxy-alpha-D-ribose 1-phosphate + thymine. It catalyses the reaction uridine + phosphate = alpha-D-ribose 1-phosphate + uracil. It carries out the reaction xanthosine + phosphate = alpha-D-ribose 1-phosphate + xanthine. Catalyzes the phosphorolysis of diverse nucleosides, yielding D-ribose 1-phosphate and the respective free bases. Can use uridine, adenosine, guanosine, cytidine, thymidine, inosine and xanthosine as substrates. Also catalyzes the reverse reactions. This is Pyrimidine/purine nucleoside phosphorylase from Leptospira interrogans serogroup Icterohaemorrhagiae serovar copenhageni (strain Fiocruz L1-130).